Consider the following 429-residue polypeptide: Ubiquinone hydroxylase UbiL (429 aa).

The interval 1–22 is disordered; it reads MSEPLLRGLAAGDPPSATGPVT.

It belongs to the UbiH/COQ6 family. It depends on FAD as a cofactor.

The enzyme catalyses a 2-(all-trans-polyprenyl)phenol + NADPH + O2 + H(+) = a 3-(all-trans-polyprenyl)benzene-1,2-diol + NADP(+) + H2O. The protein operates within cofactor biosynthesis; ubiquinone biosynthesis. Catalyzes the hydroxylation of two positions of the aromatic ring during ubiquinone biosynthesis. This Rhodospirillum rubrum (strain ATCC 11170 / ATH 1.1.1 / DSM 467 / LMG 4362 / NCIMB 8255 / S1) protein is Ubiquinone hydroxylase UbiL.